The following is a 429-amino-acid chain: Bifunctional protein GlmU (429 aa).

Residues 1–223 are pyrophosphorylase; it reads MKTSILILAA…EDEFMGINDK (223 aa). UDP-N-acetyl-alpha-D-glucosamine-binding positions include 8–11, Lys-22, and 81–82; these read LAAG and GT. Position 102 (Asp-102) interacts with Mg(2+). The UDP-N-acetyl-alpha-D-glucosamine site is built by Gly-135, Glu-149, Asn-164, and Asn-221. Position 221 (Asn-221) interacts with Mg(2+). A linker region spans residues 224–244; it reads FELSIAENFMQKKIKKYWMQQ. An N-acetyltransferase region spans residues 245–429; the sequence is GVIFHLPQST…KDYYYKKFQK (185 aa). 2 residues coordinate UDP-N-acetyl-alpha-D-glucosamine: Arg-308 and Lys-325. The Proton acceptor role is filled by His-336. Tyr-339 and Asn-350 together coordinate UDP-N-acetyl-alpha-D-glucosamine. Residues 359–360, Ser-378, Ala-396, and Arg-413 contribute to the acetyl-CoA site; that span reads NY.

In the N-terminal section; belongs to the N-acetylglucosamine-1-phosphate uridyltransferase family. The protein in the C-terminal section; belongs to the transferase hexapeptide repeat family. In terms of assembly, homotrimer. Mg(2+) is required as a cofactor.

The protein resides in the cytoplasm. The catalysed reaction is alpha-D-glucosamine 1-phosphate + acetyl-CoA = N-acetyl-alpha-D-glucosamine 1-phosphate + CoA + H(+). It carries out the reaction N-acetyl-alpha-D-glucosamine 1-phosphate + UTP + H(+) = UDP-N-acetyl-alpha-D-glucosamine + diphosphate. The protein operates within nucleotide-sugar biosynthesis; UDP-N-acetyl-alpha-D-glucosamine biosynthesis; N-acetyl-alpha-D-glucosamine 1-phosphate from alpha-D-glucosamine 6-phosphate (route II): step 2/2. Its pathway is nucleotide-sugar biosynthesis; UDP-N-acetyl-alpha-D-glucosamine biosynthesis; UDP-N-acetyl-alpha-D-glucosamine from N-acetyl-alpha-D-glucosamine 1-phosphate: step 1/1. It functions in the pathway bacterial outer membrane biogenesis; LPS lipid A biosynthesis. Functionally, catalyzes the last two sequential reactions in the de novo biosynthetic pathway for UDP-N-acetylglucosamine (UDP-GlcNAc). The C-terminal domain catalyzes the transfer of acetyl group from acetyl coenzyme A to glucosamine-1-phosphate (GlcN-1-P) to produce N-acetylglucosamine-1-phosphate (GlcNAc-1-P), which is converted into UDP-GlcNAc by the transfer of uridine 5-monophosphate (from uridine 5-triphosphate), a reaction catalyzed by the N-terminal domain. The chain is Bifunctional protein GlmU from Campylobacter jejuni subsp. jejuni serotype O:2 (strain ATCC 700819 / NCTC 11168).